Reading from the N-terminus, the 774-residue chain is Formin-like protein 13 (774 aa).

Positions 1 to 22 (MRRRVALSTAIALLVGAQLCVA) are cleaved as a signal peptide. Positions 51–67 (PPPPMSGSEAVPPPPPA) are enriched in pro residues. The segment at 51-78 (PPPPMSGSEAVPPPPPAAAASATTGGGR) is disordered. Over residues 68–78 (AAASATTGGGR) the composition is skewed to low complexity. A helical transmembrane segment spans residues 89 to 109 (IALSAGLVALAVASYSCCLLL). Disordered stretches follow at residues 130 to 163 (AAAA…DAIY), 176 to 338 (HEKS…HLKP), 374 to 402 (FLNS…RRLL), and 740 to 774 (GSGK…SSSS). Over residues 194 to 216 (DLRPLPPLKRPESQPPPPPPSTP) the composition is skewed to pro residues. The segment covering 242–261 (SSFSRSTSQHSTLEQTAMPP) has biased composition (low complexity). Positions 262 to 286 (MAAPAPPQTNPPRPVRPPPPPPPPR) are enriched in pro residues. The FH2 domain maps to 326 to 749 (GAARPPKPPH…GSGKSFRVPA (424 aa)).

This sequence belongs to the formin-like family. Class-I subfamily.

Its subcellular location is the membrane. The sequence is that of Formin-like protein 13 (FH13) from Oryza sativa subsp. japonica (Rice).